A 292-amino-acid chain; its full sequence is Aquaporin-3 (292 aa).

Over 1–24 the chain is Cytoplasmic; that stretch reads MGRQKELMNRCGEMLHIRYRLLRQ. A helical transmembrane segment spans residues 25-42; the sequence is ALAECLGTLILVMFGCGS. The Extracellular portion of the chain corresponds to 43-56; the sequence is VAQVVLSRGTHGGF. The helical transmembrane segment at 57–74 threads the bilayer; sequence LTINLAFGFAVTLAILVA. At 75–78 the chain is on the cytoplasmic side; sequence GQVS. Positions 79–92 form an intramembrane region, discontinuously helical; sequence GAHLNPAVTFAMCF. The NPA 1 motif lies at 83–85; sequence NPA. At 93-100 the chain is on the cytoplasmic side; it reads LAREPWIK. Residues 101-121 form a helical membrane-spanning segment; the sequence is LPIYTLAQTLGAFLGAGIVFG. Residues 122 to 159 are Extracellular-facing; sequence LYYDAIWAFAGNELVVSGPNGTAGIFATYPSGHLDMVN. The N-linked (GlcNAc...) asparagine glycan is linked to Asn-141. Residues 160–177 traverse the membrane as a helical segment; that stretch reads GFFDQFIGTAALIVCVLA. The Cytoplasmic segment spans residues 178–189; it reads IVDPYNNPVPRG. The chain crosses the membrane as a helical span at residues 190 to 206; sequence LEAFTVGLVVLVIGTSM. Topologically, residues 207–210 are extracellular; sequence GFNS. The discontinuously helical intramembrane region spans 211–224; that stretch reads GYAVNPARDFGPRL. The NPA 2 motif lies at 215–217; it reads NPA. The Extracellular portion of the chain corresponds to 225–242; sequence FTALAGWGSEVFTTGQNW. The helical transmembrane segment at 243-264 threads the bilayer; that stretch reads WWVPIVSPLLGSIGGVFVYQLM. Over 265–292 the chain is Cytoplasmic; it reads IGCHLEQPPPSTEAENVKLAHMKHKEQI.

It belongs to the MIP/aquaporin (TC 1.A.8) family. As to quaternary structure, homotetramer; each monomer provides an independent glycerol/water pore. Could also exist in other oligomeric states. Detected in kidney medulla and papilla, in collecting duct cells. Detected in colon.

The protein localises to the cell membrane. It is found in the basolateral cell membrane. It carries out the reaction glycerol(in) = glycerol(out). It catalyses the reaction H2O(in) = H2O(out). The catalysed reaction is urea(in) = urea(out). The enzyme catalyses H2O2(out) = H2O2(in). With respect to regulation, channel activity is inhibited by mercury ions. Aquaglyceroporins form homotetrameric transmembrane channels, with each monomer independently mediating glycerol and water transport across the plasma membrane along their osmotic gradient. Could also be permeable to urea. Also participates in cell permeability to H2O2 and H2O2-mediated signaling. In skin, transports glycerol to the epidermis and stratum corneum, where it maintains hydration, elasticity, and supports lipid biosynthesis for barrier repair. In kidney, contributes to the reabsorption of water, helping the body maintain proper fluid balance. This is Aquaporin-3 from Rattus norvegicus (Rat).